The following is a 183-amino-acid chain: Ribosomal RNA small subunit methyltransferase G (183 aa).

S-adenosyl-L-methionine is bound by residues Gly60, Phe65, 111–112, and Arg125; that span reads IE.

Belongs to the methyltransferase superfamily. RNA methyltransferase RsmG family.

It localises to the cytoplasm. The catalysed reaction is guanosine(527) in 16S rRNA + S-adenosyl-L-methionine = N(7)-methylguanosine(527) in 16S rRNA + S-adenosyl-L-homocysteine. Functionally, specifically methylates the N7 position of guanine in position 527 of 16S rRNA. In Campylobacter hominis (strain ATCC BAA-381 / DSM 21671 / CCUG 45161 / LMG 19568 / NCTC 13146 / CH001A), this protein is Ribosomal RNA small subunit methyltransferase G.